Reading from the N-terminus, the 372-residue chain is Probable dual-specificity RNA methyltransferase RlmN (372 aa).

Glu106 (proton acceptor) is an active-site residue. Positions 112-359 (YPQRNTVCIS…SCTVRDTRGR (248 aa)) constitute a Radical SAM core domain. A disulfide bond links Cys119 and Cys365. [4Fe-4S] cluster-binding residues include Cys126, Cys130, and Cys133. Residues 186–187 (GE), Ser220, 243–245 (SLH), and Asn322 each bind S-adenosyl-L-methionine. Residue Cys365 is the S-methylcysteine intermediate of the active site.

It belongs to the radical SAM superfamily. RlmN family. The cofactor is [4Fe-4S] cluster.

The protein localises to the cytoplasm. The enzyme catalyses adenosine(2503) in 23S rRNA + 2 reduced [2Fe-2S]-[ferredoxin] + 2 S-adenosyl-L-methionine = 2-methyladenosine(2503) in 23S rRNA + 5'-deoxyadenosine + L-methionine + 2 oxidized [2Fe-2S]-[ferredoxin] + S-adenosyl-L-homocysteine. It carries out the reaction adenosine(37) in tRNA + 2 reduced [2Fe-2S]-[ferredoxin] + 2 S-adenosyl-L-methionine = 2-methyladenosine(37) in tRNA + 5'-deoxyadenosine + L-methionine + 2 oxidized [2Fe-2S]-[ferredoxin] + S-adenosyl-L-homocysteine. Functionally, specifically methylates position 2 of adenine 2503 in 23S rRNA and position 2 of adenine 37 in tRNAs. This Mycolicibacterium smegmatis (strain ATCC 700084 / mc(2)155) (Mycobacterium smegmatis) protein is Probable dual-specificity RNA methyltransferase RlmN.